The primary structure comprises 354 residues: S-adenosylmethionine:tRNA ribosyltransferase-isomerase (354 aa).

Belongs to the QueA family. Monomer.

It localises to the cytoplasm. The catalysed reaction is 7-aminomethyl-7-carbaguanosine(34) in tRNA + S-adenosyl-L-methionine = epoxyqueuosine(34) in tRNA + adenine + L-methionine + 2 H(+). The protein operates within tRNA modification; tRNA-queuosine biosynthesis. Functionally, transfers and isomerizes the ribose moiety from AdoMet to the 7-aminomethyl group of 7-deazaguanine (preQ1-tRNA) to give epoxyqueuosine (oQ-tRNA). The polypeptide is S-adenosylmethionine:tRNA ribosyltransferase-isomerase (Methylobacterium radiotolerans (strain ATCC 27329 / DSM 1819 / JCM 2831 / NBRC 15690 / NCIMB 10815 / 0-1)).